Reading from the N-terminus, the 1382-residue chain is DNA-directed RNA polymerase subunit beta' (1382 aa).

Zn(2+)-binding residues include cysteine 70, cysteine 72, cysteine 85, and cysteine 88. The Mg(2+) site is built by aspartate 460, aspartate 462, and aspartate 464. Zn(2+)-binding residues include cysteine 808, cysteine 882, cysteine 889, and cysteine 892.

It belongs to the RNA polymerase beta' chain family. As to quaternary structure, the RNAP catalytic core consists of 2 alpha, 1 beta, 1 beta' and 1 omega subunit. When a sigma factor is associated with the core the holoenzyme is formed, which can initiate transcription. Mg(2+) serves as cofactor. The cofactor is Zn(2+).

It carries out the reaction RNA(n) + a ribonucleoside 5'-triphosphate = RNA(n+1) + diphosphate. DNA-dependent RNA polymerase catalyzes the transcription of DNA into RNA using the four ribonucleoside triphosphates as substrates. The polypeptide is DNA-directed RNA polymerase subunit beta' (Citrifermentans bemidjiense (strain ATCC BAA-1014 / DSM 16622 / JCM 12645 / Bem) (Geobacter bemidjiensis)).